Consider the following 307-residue polypeptide: Aspartate carbamoyltransferase catalytic subunit (307 aa).

2 residues coordinate carbamoyl phosphate: R54 and T55. Residue K83 participates in L-aspartate binding. R104, H132, and Q135 together coordinate carbamoyl phosphate. The L-aspartate site is built by R165 and R228. Carbamoyl phosphate is bound by residues L267 and P268.

The protein belongs to the aspartate/ornithine carbamoyltransferase superfamily. ATCase family. In terms of assembly, heterododecamer (2C3:3R2) of six catalytic PyrB chains organized as two trimers (C3), and six regulatory PyrI chains organized as three dimers (R2).

The enzyme catalyses carbamoyl phosphate + L-aspartate = N-carbamoyl-L-aspartate + phosphate + H(+). Its pathway is pyrimidine metabolism; UMP biosynthesis via de novo pathway; (S)-dihydroorotate from bicarbonate: step 2/3. Its function is as follows. Catalyzes the condensation of carbamoyl phosphate and aspartate to form carbamoyl aspartate and inorganic phosphate, the committed step in the de novo pyrimidine nucleotide biosynthesis pathway. This Clostridium botulinum (strain Alaska E43 / Type E3) protein is Aspartate carbamoyltransferase catalytic subunit.